The primary structure comprises 531 residues: Na(+)/H(+) antiporter NhaB (531 aa).

11 helical membrane-spanning segments follow: residues 23-45 (IAILSFLVINPIVFYLNPFVAGW), 66-86 (PGGLLAIEAVIIGMTSPSQVL), 97-117 (LLLIFMVAGIYFMKQLLLFVF), 130-164 (VSLMFCIASAFLSAFLDALTVIAVIIAVAVGFYSI), 206-226 (LLMHAGIGTALGGVCTMVGEP), 244-264 (LRMGPVTVPVFISGIATCFLV), 307-327 (AFVGVWLIVGLAFHLASVGLI), 352-372 (EEALPFTALLAVFFAIVGVII), 393-413 (LVIFYIANGLLSMVSDNVFVG), 451-471 (ATPNGQAAFLFLLTSAIAPLI), and 478-498 (MVWMALPYTIVLSIVGILAIE).

The protein belongs to the NhaB Na(+)/H(+) (TC 2.A.34) antiporter family.

The protein resides in the cell inner membrane. The catalysed reaction is 2 Na(+)(in) + 3 H(+)(out) = 2 Na(+)(out) + 3 H(+)(in). Na(+)/H(+) antiporter that extrudes sodium in exchange for external protons. The polypeptide is Na(+)/H(+) antiporter NhaB (Shewanella loihica (strain ATCC BAA-1088 / PV-4)).